A 493-amino-acid chain; its full sequence is Protein nucleotidyltransferase YdiU (493 aa).

ATP contacts are provided by G94, G96, R97, K117, D129, G130, R180, and R187. The Proton acceptor role is filled by D256. Positions 257 and 266 each coordinate Mg(2+). D266 is an ATP binding site.

It belongs to the SELO family. It depends on Mg(2+) as a cofactor. Requires Mn(2+) as cofactor.

The catalysed reaction is L-seryl-[protein] + ATP = 3-O-(5'-adenylyl)-L-seryl-[protein] + diphosphate. It carries out the reaction L-threonyl-[protein] + ATP = 3-O-(5'-adenylyl)-L-threonyl-[protein] + diphosphate. It catalyses the reaction L-tyrosyl-[protein] + ATP = O-(5'-adenylyl)-L-tyrosyl-[protein] + diphosphate. The enzyme catalyses L-histidyl-[protein] + UTP = N(tele)-(5'-uridylyl)-L-histidyl-[protein] + diphosphate. The catalysed reaction is L-seryl-[protein] + UTP = O-(5'-uridylyl)-L-seryl-[protein] + diphosphate. It carries out the reaction L-tyrosyl-[protein] + UTP = O-(5'-uridylyl)-L-tyrosyl-[protein] + diphosphate. Functionally, nucleotidyltransferase involved in the post-translational modification of proteins. It can catalyze the addition of adenosine monophosphate (AMP) or uridine monophosphate (UMP) to a protein, resulting in modifications known as AMPylation and UMPylation. This chain is Protein nucleotidyltransferase YdiU, found in Hahella chejuensis (strain KCTC 2396).